The chain runs to 215 residues: Probable phosphoglycerate mutase GpmB (215 aa).

Substrate is bound by residues 8-15 (RHGETQWN), 21-22 (QG), arginine 58, arginine 60, 82-85 (ELNM), 104-105 (RR), and 151-152 (GI). Histidine 9 acts as the Tele-phosphohistidine intermediate in catalysis. The active-site Proton donor/acceptor is glutamate 82.

Belongs to the phosphoglycerate mutase family. GpmB subfamily.

It carries out the reaction (2R)-2-phosphoglycerate = (2R)-3-phosphoglycerate. The protein operates within carbohydrate degradation; glycolysis; pyruvate from D-glyceraldehyde 3-phosphate: step 3/5. In Shigella dysenteriae serotype 1 (strain Sd197), this protein is Probable phosphoglycerate mutase GpmB.